Consider the following 170-residue polypeptide: Cytochrome c-type biogenesis protein CcmE (170 aa).

The Cytoplasmic portion of the chain corresponds to 1 to 7; sequence MTRKKRR. The chain crosses the membrane as a helical; Signal-anchor for type II membrane protein span at residues 8–28; the sequence is LILIAACGSVLALAVGLILYA. The Periplasmic segment spans residues 29 to 170; sequence MSGSIVFFRS…DSTLGPRSER (142 aa). The heme site is built by His122 and Tyr126. Residues 132-170 are disordered; the sequence is ADALKAQGRWQEGGPNRGGPAPKPATAAADSTLGPRSER.

It belongs to the CcmE/CycJ family.

It is found in the cell inner membrane. Heme chaperone required for the biogenesis of c-type cytochromes. Transiently binds heme delivered by CcmC and transfers the heme to apo-cytochromes in a process facilitated by CcmF and CcmH. This chain is Cytochrome c-type biogenesis protein CcmE, found in Methylobacterium radiotolerans (strain ATCC 27329 / DSM 1819 / JCM 2831 / NBRC 15690 / NCIMB 10815 / 0-1).